Consider the following 381-residue polypeptide: Homoserine O-succinyltransferase (381 aa).

Residues 45 to 360 enclose the AB hydrolase-1 domain; it reads NAVLVCHALN…PHGHDAFLLD (316 aa). The Nucleophile role is filled by Ser151. Substrate is bound at residue Arg221. Residues Asp321 and His354 contribute to the active site. Asp355 serves as a coordination point for substrate.

This sequence belongs to the AB hydrolase superfamily. MetX family. In terms of assembly, homodimer.

It is found in the cytoplasm. The enzyme catalyses L-homoserine + succinyl-CoA = O-succinyl-L-homoserine + CoA. It functions in the pathway amino-acid biosynthesis; L-methionine biosynthesis via de novo pathway; O-succinyl-L-homoserine from L-homoserine: step 1/1. Functionally, transfers a succinyl group from succinyl-CoA to L-homoserine, forming succinyl-L-homoserine. In Burkholderia vietnamiensis (strain G4 / LMG 22486) (Burkholderia cepacia (strain R1808)), this protein is Homoserine O-succinyltransferase.